The sequence spans 313 residues: Flagellin (313 aa).

2 coiled-coil regions span residues 5-33 (INTNDSALLAQNNLTKSKGILGSAIERLS) and 97-117 (VQSENGSNSKSDLDSIQKEVT). 4 consecutive repeat copies span residues 179-197 (KEAVAAKPAVPAQPAVPAD), 199-217 (KNGVAAKPAVPAQPEVKAQ), 255-259 (VNNLN), and 262-266 (VNNLS). Residues 179–217 (KEAVAAKPAVPAQPAVPADPKNGVAAKPAVPAQPEVKAQ) form a 2 X 19 AA approximate tandem repeats region. A compositionally biased stretch (low complexity) spans 190-199 (AQPAVPADPK). A disordered region spans residues 190–211 (AQPAVPADPKNGVAAKPAVPAQ). A coiled-coil region spans residues 252-298 (ESTVNNLNNTVNNLSAARSRIEDADYAVEVSNMSRGQILQQAGTSVL). Residues 255 to 266 (VNNLNNTVNNLS) are 2 X 5 AA approximate repeats of V-N-N-L-N.

Belongs to the bacterial flagellin family.

Its subcellular location is the secreted. The protein resides in the bacterial flagellum. In terms of biological role, flagellin is the subunit protein which polymerizes to form the filaments of bacterial flagella. This is Flagellin (fliC) from Xenorhabdus nematophila (Achromobacter nematophilus).